Here is a 306-residue protein sequence, read N- to C-terminus: Non-specific ribonucleoside hydrolase RihC (306 aa).

The active site involves His-235.

This sequence belongs to the IUNH family. RihC subfamily.

Hydrolyzes both purine and pyrimidine ribonucleosides with a broad-substrate specificity. This is Non-specific ribonucleoside hydrolase RihC from Salmonella paratyphi C (strain RKS4594).